A 292-amino-acid chain; its full sequence is 4-hydroxy-tetrahydrodipicolinate synthase (292 aa).

Thr45 provides a ligand contact to pyruvate. Tyr133 serves as the catalytic Proton donor/acceptor. The active-site Schiff-base intermediate with substrate is Lys161. Pyruvate is bound at residue Ile203.

This sequence belongs to the DapA family. Homodimer.

The protein resides in the cytoplasm. It catalyses the reaction L-aspartate 4-semialdehyde + pyruvate = (2S,4S)-4-hydroxy-2,3,4,5-tetrahydrodipicolinate + H2O + H(+). Its pathway is amino-acid biosynthesis; L-lysine biosynthesis via DAP pathway; (S)-tetrahydrodipicolinate from L-aspartate: step 3/4. Functionally, catalyzes the condensation of (S)-aspartate-beta-semialdehyde [(S)-ASA] and pyruvate to 4-hydroxy-tetrahydrodipicolinate (HTPA). The sequence is that of 4-hydroxy-tetrahydrodipicolinate synthase from Pseudomonas syringae pv. syringae (strain B728a).